Consider the following 567-residue polypeptide: 2-succinyl-5-enolpyruvyl-6-hydroxy-3-cyclohexene-1-carboxylate synthase (567 aa).

This sequence belongs to the TPP enzyme family. MenD subfamily. As to quaternary structure, homodimer. Mg(2+) serves as cofactor. The cofactor is Mn(2+). Requires thiamine diphosphate as cofactor.

It carries out the reaction isochorismate + 2-oxoglutarate + H(+) = 5-enolpyruvoyl-6-hydroxy-2-succinyl-cyclohex-3-ene-1-carboxylate + CO2. The protein operates within quinol/quinone metabolism; 1,4-dihydroxy-2-naphthoate biosynthesis; 1,4-dihydroxy-2-naphthoate from chorismate: step 2/7. It functions in the pathway quinol/quinone metabolism; menaquinone biosynthesis. Catalyzes the thiamine diphosphate-dependent decarboxylation of 2-oxoglutarate and the subsequent addition of the resulting succinic semialdehyde-thiamine pyrophosphate anion to isochorismate to yield 2-succinyl-5-enolpyruvyl-6-hydroxy-3-cyclohexene-1-carboxylate (SEPHCHC). This is 2-succinyl-5-enolpyruvyl-6-hydroxy-3-cyclohexene-1-carboxylate synthase from Yersinia pseudotuberculosis serotype O:1b (strain IP 31758).